A 156-amino-acid polypeptide reads, in one-letter code: Small ribosomal subunit protein uS7 (156 aa).

The protein belongs to the universal ribosomal protein uS7 family. Part of the 30S ribosomal subunit. Contacts proteins S9 and S11.

Its function is as follows. One of the primary rRNA binding proteins, it binds directly to 16S rRNA where it nucleates assembly of the head domain of the 30S subunit. Is located at the subunit interface close to the decoding center, probably blocks exit of the E-site tRNA. This chain is Small ribosomal subunit protein uS7, found in Staphylococcus carnosus (strain TM300).